We begin with the raw amino-acid sequence, 1183 residues long: Protein deacetylase HDAC6 (1183 aa).

Residues Met-1–Pro-61 form a disordered region. The span at Asn-18 to Thr-29 shows a compositional bias: polar residues. At Ser-21 the chain carries Phosphoserine. Residue Arg-32 is modified to Omega-N-methylarginine. Positions Leu-66–Leu-75 match the Nuclear export signal motif. 2 histone deacetylase regions span residues Gly-86–Gly-434 and Gly-512–Gly-830. His-215 serves as the catalytic 1. Catalysis depends on His-641, which acts as the 2. Residues Ala-972 to Glu-1042 form a disordered region. Over residues Thr-980–Ser-996 the composition is skewed to low complexity. Phosphothreonine is present on residues Thr-990, Thr-995, and Thr-1005. Residues Pro-997–Ala-1008 are compositionally biased toward polar residues. Ser-1009 bears the Phosphoserine mark. Over residues Glu-1021–Gln-1035 the composition is skewed to low complexity. A UBP-type zinc finger spans residues Ser-1079–Glu-1177. Zn(2+) contacts are provided by Cys-1081, His-1083, Cys-1101, Cys-1104, Cys-1113, Cys-1116, and Cys-1121. Residues Ser-1122–Tyr-1124 are ubiquitin binding. His-1128, His-1132, His-1138, Cys-1151, and Cys-1154 together coordinate Zn(2+). Residues Trp-1150–Tyr-1157 are ubiquitin binding.

It belongs to the histone deacetylase family. HD type 2 subfamily. In terms of assembly, forms a trimeric complex in the nucleus consisting of BANP, HDAC6 and KHDRBS1/SAM68; HDAC6 keeps KHDRBS1 in a deacetylated state which inhibits the inclusion of CD44 alternate exons. The complex is disrupted by MAPK1/MAPK3-mediated phosphorylation of BANP which results in BANP export to the cytoplasm. This facilitates acetylation of KHDRBS1 and CD44 variant exon inclusion. Interacts with SIRT2 (via both phosphorylated, unphosphorylated, active or inactive forms); the interaction is necessary for the complex to interact with alpha-tubulin. Under proteasome impairment conditions, interacts with UBD via its histone deacetylase 1 and UBP-type zinc-finger regions. Interacts with BBIP1, CBFA2T3, CYLD, DDIT3/CHOP, ZMYND15, F-actin and HDAC11. Interacts with RIPOR2; this interaction occurs during early myogenic differentiation and prevents HDAC6 to deacetylate tubulin. Interacts with AURKA; AURKA-mediated phosphorylation of HDAC6 promotes deacetylation of alpha-tubulin. Interacts with DYSF; this interaction occurs during early myogenic differentiation. Interacts with TPPP; inhibiting the tubulin deacetylase activity of HDAC6. Interacts with DYNLL1. Interacts with ATP13A2; the interaction results in recruitment of HDAC6 to lysosomes to promote CTTN deacetylation. Interacts with CCDC141 (via the N-terminal region); inhibiting the deacetylase activity of HDAC6. Interacts with IPO7; the interaction facilitates HDAC6 nuclear translocation in dental papilla cells. It depends on Zn(2+) as a cofactor. Post-translationally, phosphorylated by AURKA; phosphorylation increases HDAC6-mediated deacetylation of alpha-tubulin and subsequent disassembly of cilia. Ubiquitinated. Its polyubiquitination however does not lead to its degradation. In terms of processing, sumoylated in vitro.

It is found in the cytoplasm. Its subcellular location is the cytoskeleton. It localises to the nucleus. The protein localises to the perikaryon. The protein resides in the cell projection. It is found in the dendrite. Its subcellular location is the axon. It localises to the cilium. The protein localises to the microtubule organizing center. The protein resides in the centrosome. It is found in the cilium basal body. It carries out the reaction N(6)-acetyl-L-lysyl-[protein] + H2O = L-lysyl-[protein] + acetate. It catalyses the reaction N(6)-acetyl-L-lysyl-[alpha-tubulin] + H2O = L-lysyl-[alpha-tubulin] + acetate. It participates in protein modification; protein ubiquitination. Deacetylates a wide range of non-histone substrates. Plays a central role in microtubule-dependent cell motility by mediating deacetylation of tubulin. Required for cilia disassembly via deacetylation of alpha-tubulin. Alpha-tubulin deacetylation results in destabilization of dynamic microtubules. Promotes deacetylation of CTTN, leading to actin polymerization, promotion of autophagosome-lysosome fusion and completion of autophagy. Deacetylates SQSTM1. Deacetylates peroxiredoxins PRDX1 and PRDX2, decreasing their reducing activity. Deacetylates antiviral protein RIGI in the presence of viral mRNAs which is required for viral RNA detection by RIGI. Sequentially deacetylates and polyubiquitinates DNA mismatch repair protein MSH2 which leads to MSH2 degradation, reducing cellular sensitivity to DNA-damaging agents and decreasing cellular DNA mismatch repair activities. Deacetylates DNA mismatch repair protein MLH1 which prevents recruitment of the MutL alpha complex (formed by the MLH1-PMS2 heterodimer) to the MutS alpha complex (formed by the MSH2-MSH6 heterodimer), leading to tolerance of DNA damage. Deacetylates RHOT1/MIRO1 which blocks mitochondrial transport and mediates axon growth inhibition. Deacetylates transcription factor SP1 which leads to increased expression of ENG, positively regulating angiogenesis. Deacetylates KHDRBS1/SAM68 which regulates alternative splicing by inhibiting the inclusion of CD44 alternate exons. Promotes odontoblast differentiation following IPO7-mediated nuclear import and subsequent repression of RUNX2 expression. In addition to its protein deacetylase activity, plays a key role in the degradation of misfolded proteins: when misfolded proteins are too abundant to be degraded by the chaperone refolding system and the ubiquitin-proteasome, mediates the transport of misfolded proteins to a cytoplasmic juxtanuclear structure called aggresome. Probably acts as an adapter that recognizes polyubiquitinated misfolded proteins and targets them to the aggresome, facilitating their clearance by autophagy. The protein is Protein deacetylase HDAC6 of Rattus norvegicus (Rat).